The primary structure comprises 558 residues: 2-isopropylmalate synthase (558 aa).

One can recognise a Pyruvate carboxyltransferase domain in the interval 28–304 (PIWCSVDLRD…DPELEFSNLN (277 aa)). Residues aspartate 37, histidine 243, histidine 245, and asparagine 279 each contribute to the Mg(2+) site. The regulatory domain stretch occupies residues 438–558 (NRSPYYLKNY…VSALNRSKLK (121 aa)).

This sequence belongs to the alpha-IPM synthase/homocitrate synthase family. LeuA type 2 subfamily. As to quaternary structure, homodimer. Mg(2+) is required as a cofactor.

Its subcellular location is the cytoplasm. The catalysed reaction is 3-methyl-2-oxobutanoate + acetyl-CoA + H2O = (2S)-2-isopropylmalate + CoA + H(+). It participates in amino-acid biosynthesis; L-leucine biosynthesis; L-leucine from 3-methyl-2-oxobutanoate: step 1/4. Catalyzes the condensation of the acetyl group of acetyl-CoA with 3-methyl-2-oxobutanoate (2-ketoisovalerate) to form 3-carboxy-3-hydroxy-4-methylpentanoate (2-isopropylmalate). The polypeptide is 2-isopropylmalate synthase (Clostridium acetobutylicum (strain ATCC 824 / DSM 792 / JCM 1419 / IAM 19013 / LMG 5710 / NBRC 13948 / NRRL B-527 / VKM B-1787 / 2291 / W)).